The following is a 351-amino-acid chain: Photosystem II D2 protein (351 aa).

Residues 39 to 59 (TAYLAIGGWLTGTTFVTSWYT) form a helical membrane-spanning segment. Position 116 (His-116) interacts with chlorophyll a. The helical transmembrane segment at 123–139 (GFMLRQFEIARLVGIRP) threads the bilayer. 2 residues coordinate pheophytin a: Gln-128 and Asn-141. Residues 151–164 (VFVSVFLMYPLGQS) form a helical membrane-spanning segment. Position 196 (His-196) interacts with chlorophyll a. A helical membrane pass occupies residues 206 to 226 (GALLCAIHGATVENTLFEDGE). Residues His-213 and Phe-260 each coordinate a plastoquinone. Residue His-213 coordinates Fe cation. Fe cation is bound at residue His-267. Residues 277-293 (GLWTSSIGIIGLALNLR) form a helical membrane-spanning segment.

This sequence belongs to the reaction center PufL/M/PsbA/D family. In terms of assembly, PSII is composed of 1 copy each of membrane proteins PsbA, PsbB, PsbC, PsbD, PsbE, PsbF, PsbH, PsbI, PsbJ, PsbK, PsbL, PsbM, PsbT, PsbX, PsbY, PsbZ, Psb30/Ycf12, peripheral proteins PsbO, CyanoQ (PsbQ), PsbU, PsbV and a large number of cofactors. It forms dimeric complexes. The D1/D2 heterodimer binds P680, chlorophylls that are the primary electron donor of PSII, and subsequent electron acceptors. It shares a non-heme iron and each subunit binds pheophytin, quinone, additional chlorophylls, carotenoids and lipids. There is also a Cl(-1) ion associated with D1 and D2, which is required for oxygen evolution. The PSII complex binds additional chlorophylls, carotenoids and specific lipids. serves as cofactor.

Its subcellular location is the cellular thylakoid membrane. The enzyme catalyses 2 a plastoquinone + 4 hnu + 2 H2O = 2 a plastoquinol + O2. Functionally, photosystem II (PSII) is a light-driven water:plastoquinone oxidoreductase that uses light energy to abstract electrons from H(2)O, generating O(2) and a proton gradient subsequently used for ATP formation. It consists of a core antenna complex that captures photons, and an electron transfer chain that converts photonic excitation into a charge separation. The D1/D2 (PsbA/PsbD) reaction center heterodimer binds P680, the primary electron donor of PSII as well as several subsequent electron acceptors. D2 is needed for assembly of a stable PSII complex. The polypeptide is Photosystem II D2 protein (Synechococcus sp. (strain CC9605)).